The following is a 400-amino-acid chain: tRNA(Ile)-lysidine synthase (400 aa).

An ATP-binding site is contributed by 25-30 (SGGVDS).

This sequence belongs to the tRNA(Ile)-lysidine synthase family.

It is found in the cytoplasm. The catalysed reaction is cytidine(34) in tRNA(Ile2) + L-lysine + ATP = lysidine(34) in tRNA(Ile2) + AMP + diphosphate + H(+). Ligates lysine onto the cytidine present at position 34 of the AUA codon-specific tRNA(Ile) that contains the anticodon CAU, in an ATP-dependent manner. Cytidine is converted to lysidine, thus changing the amino acid specificity of the tRNA from methionine to isoleucine. This chain is tRNA(Ile)-lysidine synthase, found in Francisella philomiragia subsp. philomiragia (strain ATCC 25017 / CCUG 19701 / FSC 153 / O#319-036).